Here is a 119-residue protein sequence, read N- to C-terminus: Holo-[acyl-carrier-protein] synthase (119 aa).

Positions 8 and 58 each coordinate Mg(2+).

The protein belongs to the P-Pant transferase superfamily. AcpS family. Mg(2+) serves as cofactor.

It is found in the cytoplasm. The catalysed reaction is apo-[ACP] + CoA = holo-[ACP] + adenosine 3',5'-bisphosphate + H(+). Its function is as follows. Transfers the 4'-phosphopantetheine moiety from coenzyme A to a Ser of acyl-carrier-protein. The polypeptide is Holo-[acyl-carrier-protein] synthase (Bacillus cereus (strain G9842)).